We begin with the raw amino-acid sequence, 342 residues long: N-acetyl-gamma-glutamyl-phosphate reductase (342 aa).

The active site involves C148.

The protein belongs to the NAGSA dehydrogenase family. Type 1 subfamily.

Its subcellular location is the cytoplasm. The enzyme catalyses N-acetyl-L-glutamate 5-semialdehyde + phosphate + NADP(+) = N-acetyl-L-glutamyl 5-phosphate + NADPH + H(+). It functions in the pathway amino-acid biosynthesis; L-arginine biosynthesis; N(2)-acetyl-L-ornithine from L-glutamate: step 3/4. Functionally, catalyzes the NADPH-dependent reduction of N-acetyl-5-glutamyl phosphate to yield N-acetyl-L-glutamate 5-semialdehyde. This chain is N-acetyl-gamma-glutamyl-phosphate reductase, found in Methanococcus vannielii (strain ATCC 35089 / DSM 1224 / JCM 13029 / OCM 148 / SB).